The sequence spans 152 residues: MLRRFPTRTTAPGQGGARRSRVRALAWLLASGAMTHLSPALADVPYVLVKTNMVVTSVAMKPYEVTPTRMLVCGIAAKLGAAASSPDAHVPFCFGKDLKRPGSSPMEVMLRAVFMQQRPLRMFLGPKQLTFEGKPALELIRMVECSGKQDCP.

An N-terminal signal peptide occupies residues 1 to 42 (MLRRFPTRTTAPGQGGARRSRVRALAWLLASGAMTHLSPALA). Intrachain disulfides connect C73/C93 and C145/C151.

As to quaternary structure, pertussis toxin contains five different chains, S1-S5. They are organized into 2 functional subunits: A, composed of S1 (which is toxic) and B, containing S2, S3, S5, and two copies of S4 (B binds to the membrane receptors). Dimers of S2-S4 and S3-S4 are held together by S5.

It is found in the secreted. The protein resides in the host cell membrane. In terms of biological role, PTX oligomer B binds to receptors on the eukaryotic cell surface and facilitates the translocation of the toxic subunit across the cell membrane. The sequence is that of Pertussis toxin subunit 4 (ptxD) from Bordetella parapertussis (strain 12822 / ATCC BAA-587 / NCTC 13253).